The sequence spans 78 residues: MANEVFNSSLFVIGTYLFLGTLYLVFIPLGLYFWMNTRWNYMGKIERLLIYSLVFLFFPGLILFAPFLNLRMNGQGDV.

2 helical membrane passes run 10 to 30 and 48 to 68; these read LFVI…IPLG and LLIY…APFL.

This sequence belongs to the complex I NdhL subunit family. As to quaternary structure, NDH-1 can be composed of about 15 different subunits; different subcomplexes with different compositions have been identified which probably have different functions.

The protein localises to the cellular thylakoid membrane. The enzyme catalyses a plastoquinone + NADH + (n+1) H(+)(in) = a plastoquinol + NAD(+) + n H(+)(out). It carries out the reaction a plastoquinone + NADPH + (n+1) H(+)(in) = a plastoquinol + NADP(+) + n H(+)(out). NDH-1 shuttles electrons from an unknown electron donor, via FMN and iron-sulfur (Fe-S) centers, to quinones in the respiratory and/or the photosynthetic chain. The immediate electron acceptor for the enzyme in this species is believed to be plastoquinone. Couples the redox reaction to proton translocation, and thus conserves the redox energy in a proton gradient. Cyanobacterial NDH-1 also plays a role in inorganic carbon-concentration. This chain is NAD(P)H-quinone oxidoreductase subunit L, found in Prochlorococcus marinus (strain SARG / CCMP1375 / SS120).